Consider the following 205-residue polypeptide: Adenylyl-sulfate kinase (205 aa).

ATP is bound at residue Gly-31–Ser-38. Catalysis depends on Ser-105, which acts as the Phosphoserine intermediate.

The protein belongs to the APS kinase family.

It catalyses the reaction adenosine 5'-phosphosulfate + ATP = 3'-phosphoadenylyl sulfate + ADP + H(+). It functions in the pathway sulfur metabolism; hydrogen sulfide biosynthesis; sulfite from sulfate: step 2/3. Catalyzes the synthesis of activated sulfate. This Shewanella baltica (strain OS195) protein is Adenylyl-sulfate kinase.